We begin with the raw amino-acid sequence, 184 residues long: Large ribosomal subunit protein uL6 (184 aa).

Belongs to the universal ribosomal protein uL6 family. In terms of assembly, part of the 50S ribosomal subunit.

In terms of biological role, this protein binds to the 23S rRNA, and is important in its secondary structure. It is located near the subunit interface in the base of the L7/L12 stalk, and near the tRNA binding site of the peptidyltransferase center. The protein is Large ribosomal subunit protein uL6 of Thermococcus onnurineus (strain NA1).